The sequence spans 191 residues: Guanylate kinase (191 aa).

One can recognise a Guanylate kinase-like domain in the interval 6 to 184 (GLIIILSSPS…TIQQIHTIIL (179 aa)). Residue 13–20 (SPSGAGKS) participates in ATP binding.

It belongs to the guanylate kinase family.

It is found in the cytoplasm. It catalyses the reaction GMP + ATP = GDP + ADP. In terms of biological role, essential for recycling GMP and indirectly, cGMP. The protein is Guanylate kinase of Rickettsia bellii (strain RML369-C).